A 217-amino-acid polypeptide reads, in one-letter code: MSEAMMWLMARGVWETLMMTFVSGFFGFVLGLPVGVLLYVTRPGQIIANNKIYRTLSGVVNIFRSIPFIILLVWMIPFTRMIVGTSIGLQAAIVPLTVGAAPFIARMVENALLEIPSGLVEAARAMGATPMQIIKKVLLPEALPGLVNAATITLITLVGYSAMGGAVGAGGLGQIGYQYGYIGYNATVMNTVLVLLVILVYLIQLSGDRIVKAVTHK.

The 192-residue stretch at 13-204 (VWETLMMTFV…LLVILVYLIQ (192 aa)) folds into the ABC transmembrane type-1 domain. Helical transmembrane passes span 20–40 (TFVS…LLYV), 58–78 (GVVN…MIPF), 81–101 (MIVG…VGAA), 152–172 (ITLI…AGGL), and 186–206 (ATVM…IQLS).

Belongs to the binding-protein-dependent transport system permease family. CysTW subfamily.

The protein resides in the cell inner membrane. In terms of biological role, part of the binding-protein-dependent transport system for D-methionine and the toxic methionine analog alpha-methyl-methionine. Probably responsible for the translocation of the substrate across the membrane. The protein is D-methionine transport system permease protein MetI (metI) of Yersinia pestis.